We begin with the raw amino-acid sequence, 598 residues long: 2-succinyl-5-enolpyruvyl-6-hydroxy-3-cyclohexene-1-carboxylate synthase (598 aa).

This sequence belongs to the TPP enzyme family. MenD subfamily. Homodimer. Mg(2+) serves as cofactor. The cofactor is Mn(2+). Thiamine diphosphate is required as a cofactor.

It carries out the reaction isochorismate + 2-oxoglutarate + H(+) = 5-enolpyruvoyl-6-hydroxy-2-succinyl-cyclohex-3-ene-1-carboxylate + CO2. It functions in the pathway quinol/quinone metabolism; 1,4-dihydroxy-2-naphthoate biosynthesis; 1,4-dihydroxy-2-naphthoate from chorismate: step 2/7. Its pathway is cofactor biosynthesis; phylloquinone biosynthesis. Functionally, catalyzes the thiamine diphosphate-dependent decarboxylation of 2-oxoglutarate and the subsequent addition of the resulting succinic semialdehyde-thiamine pyrophosphate anion to isochorismate to yield 2-succinyl-5-enolpyruvyl-6-hydroxy-3-cyclohexene-1-carboxylate (SEPHCHC). The chain is 2-succinyl-5-enolpyruvyl-6-hydroxy-3-cyclohexene-1-carboxylate synthase from Prochlorococcus marinus (strain NATL1A).